A 965-amino-acid polypeptide reads, in one-letter code: Villin-3 (965 aa).

Gelsolin-like repeat units lie at residues 27–79, 150–190, 262–304, 401–452, 533–573, and 635–676; these read ENFE…DEAG, VHLK…QERA, GQVE…EERK, ANSK…EDQE, NKAL…EQQE, and FQVE…KEKQ. Composition is skewed to low complexity over residues 769–780 and 808–828; these read AFNSSSGRTSSP and SSPSSKSPPRRSGLTSQASQR. Disordered regions lie at residues 769–828 and 840–906; these read AFNS…ASQR and TAEK…GVTF. Acidic residues predominate over residues 865–879; the sequence is EATEEATEAKEEEEV. Position 880 is a phosphoserine (S880). The 66-residue stretch at 900-965 folds into the HP domain; that stretch reads ETTGVTFTYE…DLLKKKFNLF (66 aa).

The protein belongs to the villin/gelsolin family. In terms of tissue distribution, expressed in all tissues examined, including root hairs.

Its subcellular location is the cytoplasm. It is found in the cytoskeleton. Its function is as follows. Binds actin and actin filament bundles in a Ca(2+)-insensitive manner, but severs actin filaments in a calcium-dependent manner, regardless of the presence or not of VLN1 (AC O81643). Acts redundantly with VLN2 (AC O81644) to generate thick actin filament bundles, to regulate directional organ growth and in sclerenchyma development. The sequence is that of Villin-3 from Arabidopsis thaliana (Mouse-ear cress).